The following is a 99-amino-acid chain: NADH-quinone oxidoreductase subunit K (99 aa).

Transmembrane regions (helical) follow at residues 3–23 (PDNY…GVLL), 28–48 (IVMF…FVTF), and 59–79 (VVAF…LAII).

It belongs to the complex I subunit 4L family. In terms of assembly, NDH-1 is composed of 14 different subunits. Subunits NuoA, H, J, K, L, M, N constitute the membrane sector of the complex.

It localises to the cell membrane. It catalyses the reaction a quinone + NADH + 5 H(+)(in) = a quinol + NAD(+) + 4 H(+)(out). In terms of biological role, NDH-1 shuttles electrons from NADH, via FMN and iron-sulfur (Fe-S) centers, to quinones in the respiratory chain. The immediate electron acceptor for the enzyme in this species is believed to be a menaquinone. Couples the redox reaction to proton translocation (for every two electrons transferred, four hydrogen ions are translocated across the cytoplasmic membrane), and thus conserves the redox energy in a proton gradient. This is NADH-quinone oxidoreductase subunit K from Mycolicibacterium vanbaalenii (strain DSM 7251 / JCM 13017 / BCRC 16820 / KCTC 9966 / NRRL B-24157 / PYR-1) (Mycobacterium vanbaalenii).